The primary structure comprises 192 residues: dTTP/UTP pyrophosphatase (192 aa).

Asp-70 functions as the Proton acceptor in the catalytic mechanism.

This sequence belongs to the Maf family. YhdE subfamily. A divalent metal cation serves as cofactor.

Its subcellular location is the cytoplasm. The enzyme catalyses dTTP + H2O = dTMP + diphosphate + H(+). The catalysed reaction is UTP + H2O = UMP + diphosphate + H(+). Nucleoside triphosphate pyrophosphatase that hydrolyzes dTTP and UTP. May have a dual role in cell division arrest and in preventing the incorporation of modified nucleotides into cellular nucleic acids. The protein is dTTP/UTP pyrophosphatase of Clostridium perfringens (strain SM101 / Type A).